The sequence spans 256 residues: MATRRYSFGRTDEATHPDSMRASLAEFASTFIFVFAGEGSGLALVKIYQDSAFSAGELLALALAHAFALFAAVSASMHVSGGHVNPAVSFGALIGGRISVIRAVYYWIAQLLGSIVAALVLRLVTNNMRPSGFHVSPGVGVGHMFILEVVMTFGLMYTVYGTAIDPKRGAVSYIAPLAIGLIVGANILVGGPFDGACMNPALAFGPSLVGWQWHQHWIFWVGPLLGAALAALVYEYAVIPIEPPPHHHQPLATEDY.

Residues 1-24 (MATRRYSFGRTDEATHPDSMRASL) are Cytoplasmic-facing. Serine 7 is subject to Phosphoserine; by CPK. The chain crosses the membrane as a helical span at residues 25-44 (AEFASTFIFVFAGEGSGLAL). The Vacuolar segment spans residues 45 to 57 (VKIYQDSAFSAGE). A helical transmembrane segment spans residues 58-77 (LLALALAHAFALFAAVSASM). At 78–102 (HVSGGHVNPAVSFGALIGGRISVIR) the chain is on the cytoplasmic side. An NPA 1 motif is present at residues 85-87 (NPA). A helical transmembrane segment spans residues 103 to 121 (AVYYWIAQLLGSIVAALVL). Residues 122–143 (RLVTNNMRPSGFHVSPGVGVGH) lie on the Vacuolar side of the membrane. Residues 144–164 (MFILEVVMTFGLMYTVYGTAI) form a helical membrane-spanning segment. Topologically, residues 165-169 (DPKRG) are cytoplasmic. A helical transmembrane segment spans residues 170-189 (AVSYIAPLAIGLIVGANILV). The Vacuolar segment spans residues 190 to 216 (GGPFDGACMNPALAFGPSLVGWQWHQH). Positions 199–201 (NPA) match the NPA 2 motif. Residues 217-239 (WIFWVGPLLGAALAALVYEYAVI) form a helical membrane-spanning segment. The Cytoplasmic segment spans residues 240–256 (PIEPPPHHHQPLATEDY).

This sequence belongs to the MIP/aquaporin (TC 1.A.8) family. TIP (TC 1.A.8.10) subfamily. In terms of processing, phosphorylated by a tonoplast-bound calcium-dependent protein kinase. As to expression, found in all seed tissues that are alive at seed maturity, but not in tissues that lose viability during seed maturation.

It is found in the vacuole membrane. Its function is as follows. Channel protein in tonoplast. These proteins may allow the diffusion of amino acids and/or peptides from the vacuolar compartment to the cytoplasm. The protein is Probable aquaporin TIP-type alpha of Phaseolus vulgaris (Kidney bean).